The following is a 129-amino-acid chain: MNTIHLEIVTPEGLIFSNDAKMVVLPGSEGEFGVLPGHASLVSLLKIGVVDIENVDGTHDAVAIDWGYVKIDENKVIVLVDGAVYVAGNSESEIAQSIENAKTLVKRMSDGNGILATALARIENAARAR.

The protein belongs to the ATPase epsilon chain family. F-type ATPases have 2 components, CF(1) - the catalytic core - and CF(0) - the membrane proton channel. CF(1) has five subunits: alpha(3), beta(3), gamma(1), delta(1), epsilon(1). CF(0) has three main subunits: a, b and c.

It is found in the cell inner membrane. Its function is as follows. Produces ATP from ADP in the presence of a proton gradient across the membrane. This Campylobacter fetus subsp. fetus (strain 82-40) protein is ATP synthase epsilon chain.